A 459-amino-acid chain; its full sequence is Methylenetetrahydrofolate--tRNA-(uracil-5-)-methyltransferase TrmFO (459 aa).

Residue 26 to 31 (GGGLAG) participates in FAD binding.

Belongs to the MnmG family. TrmFO subfamily. FAD is required as a cofactor.

It is found in the cytoplasm. The catalysed reaction is uridine(54) in tRNA + (6R)-5,10-methylene-5,6,7,8-tetrahydrofolate + NADH + H(+) = 5-methyluridine(54) in tRNA + (6S)-5,6,7,8-tetrahydrofolate + NAD(+). It catalyses the reaction uridine(54) in tRNA + (6R)-5,10-methylene-5,6,7,8-tetrahydrofolate + NADPH + H(+) = 5-methyluridine(54) in tRNA + (6S)-5,6,7,8-tetrahydrofolate + NADP(+). In terms of biological role, catalyzes the folate-dependent formation of 5-methyl-uridine at position 54 (M-5-U54) in all tRNAs. The sequence is that of Methylenetetrahydrofolate--tRNA-(uracil-5-)-methyltransferase TrmFO from Synechococcus sp. (strain JA-2-3B'a(2-13)) (Cyanobacteria bacterium Yellowstone B-Prime).